The sequence spans 127 residues: MSYRKLGRTSSQRKALLRDLTTDLLINERIVTTEARAKEVRSTAEKMITLGKRGDLHARRQAAAYVRNEIASVEEQDDNSVVVKSALQKLFSDLAPKYADRKGGYTRILKTAPRRGDGAPMVIIELV.

The protein belongs to the bacterial ribosomal protein bL17 family. In terms of assembly, part of the 50S ribosomal subunit. Contacts protein L32.

The polypeptide is Large ribosomal subunit protein bL17 (Lacticaseibacillus casei (strain BL23) (Lactobacillus casei)).